Consider the following 227-residue polypeptide: Cytochrome c oxidase subunit 2 (227 aa).

Residues 1–14 (MTHPLQLGFQDATS) lie on the Mitochondrial intermembrane side of the membrane. The helical transmembrane segment at 15 to 45 (PIMEELLHFHDHTLMIVFLISSLVLYIITLM) threads the bilayer. The Mitochondrial matrix portion of the chain corresponds to 46–59 (LTTKLTHTSTMDAQ). The chain crosses the membrane as a helical span at residues 60 to 87 (EVETVWTILPAIILILIALPSLRILYMM). Topologically, residues 88–227 (DEINNPLLTV…YFEDWSVSMT (140 aa)) are mitochondrial intermembrane. Cu cation is bound by residues H161, C196, E198, C200, H204, and M207. E198 contributes to the Mg(2+) binding site. Position 218 is a phosphotyrosine (Y218).

This sequence belongs to the cytochrome c oxidase subunit 2 family. In terms of assembly, component of the cytochrome c oxidase (complex IV, CIV), a multisubunit enzyme composed of 14 subunits. The complex is composed of a catalytic core of 3 subunits MT-CO1, MT-CO2 and MT-CO3, encoded in the mitochondrial DNA, and 11 supernumerary subunits COX4I, COX5A, COX5B, COX6A, COX6B, COX6C, COX7A, COX7B, COX7C, COX8 and NDUFA4, which are encoded in the nuclear genome. The complex exists as a monomer or a dimer and forms supercomplexes (SCs) in the inner mitochondrial membrane with NADH-ubiquinone oxidoreductase (complex I, CI) and ubiquinol-cytochrome c oxidoreductase (cytochrome b-c1 complex, complex III, CIII), resulting in different assemblies (supercomplex SCI(1)III(2)IV(1) and megacomplex MCI(2)III(2)IV(2)). Found in a complex with TMEM177, COA6, COX18, COX20, SCO1 and SCO2. Interacts with TMEM177 in a COX20-dependent manner. Interacts with COX20. Interacts with COX16. The cofactor is Cu cation.

The protein resides in the mitochondrion inner membrane. The enzyme catalyses 4 Fe(II)-[cytochrome c] + O2 + 8 H(+)(in) = 4 Fe(III)-[cytochrome c] + 2 H2O + 4 H(+)(out). Component of the cytochrome c oxidase, the last enzyme in the mitochondrial electron transport chain which drives oxidative phosphorylation. The respiratory chain contains 3 multisubunit complexes succinate dehydrogenase (complex II, CII), ubiquinol-cytochrome c oxidoreductase (cytochrome b-c1 complex, complex III, CIII) and cytochrome c oxidase (complex IV, CIV), that cooperate to transfer electrons derived from NADH and succinate to molecular oxygen, creating an electrochemical gradient over the inner membrane that drives transmembrane transport and the ATP synthase. Cytochrome c oxidase is the component of the respiratory chain that catalyzes the reduction of oxygen to water. Electrons originating from reduced cytochrome c in the intermembrane space (IMS) are transferred via the dinuclear copper A center (CU(A)) of subunit 2 and heme A of subunit 1 to the active site in subunit 1, a binuclear center (BNC) formed by heme A3 and copper B (CU(B)). The BNC reduces molecular oxygen to 2 water molecules using 4 electrons from cytochrome c in the IMS and 4 protons from the mitochondrial matrix. This Carlito syrichta (Philippine tarsier) protein is Cytochrome c oxidase subunit 2 (MT-CO2).